The following is a 254-amino-acid chain: Receptor expression-enhancing protein 3 (254 aa).

The next 3 helical transmembrane spans lie at 1–21 (MVSW…YPAY), 35–55 (YVRW…ETVA), and 59–79 (LAWF…LLSP). A disordered region spans residues 162–232 (DEPVGHRPYQ…QSMKSVKTIK (71 aa)). Over residues 198–212 (EQTDEEAEGPFSDDE) the composition is skewed to acidic residues. Threonine 200 is subject to Phosphothreonine. Residue serine 209 is modified to Phosphoserine.

This sequence belongs to the DP1 family.

It localises to the endoplasmic reticulum membrane. In terms of biological role, microtubule-binding protein required to ensure proper cell division and nuclear envelope reassembly by sequestering the endoplasmic reticulum away from chromosomes during mitosis. Probably acts by clearing the endoplasmic reticulum membrane from metaphase chromosomes. The protein is Receptor expression-enhancing protein 3 (Reep3) of Mus musculus (Mouse).